The following is a 229-amino-acid chain: Endonuclease V (229 aa).

It belongs to the endonuclease V family.

It localises to the cytoplasm. It catalyses the reaction Endonucleolytic cleavage at apurinic or apyrimidinic sites to products with a 5'-phosphate.. In terms of biological role, DNA repair enzyme involved in the repair of deaminated bases. Selectively cleaves double-stranded DNA at the second phosphodiester bond 3' to a deoxyinosine leaving behind the intact lesion on the nicked DNA. In Methanopyrus kandleri (strain AV19 / DSM 6324 / JCM 9639 / NBRC 100938), this protein is Endonuclease V.